The chain runs to 475 residues: Eukaryotic translation initiation factor 3 subunit L (475 aa).

Residues 257–451 (DAIRMFSHIL…DLDYAMQGDL (195 aa)) enclose the PCI domain.

This sequence belongs to the eIF-3 subunit L family. In terms of assembly, component of the eukaryotic translation initiation factor 3 (eIF-3) complex.

The protein localises to the cytoplasm. Component of the eukaryotic translation initiation factor 3 (eIF-3) complex, which is involved in protein synthesis of a specialized repertoire of mRNAs and, together with other initiation factors, stimulates binding of mRNA and methionyl-tRNAi to the 40S ribosome. The eIF-3 complex specifically targets and initiates translation of a subset of mRNAs involved in cell proliferation. This Sclerotinia sclerotiorum (strain ATCC 18683 / 1980 / Ss-1) (White mold) protein is Eukaryotic translation initiation factor 3 subunit L.